The sequence spans 357 residues: Phosphoserine aminotransferase (357 aa).

Arg41 serves as a coordination point for L-glutamate. Pyridoxal 5'-phosphate is bound by residues 76–77, Trp102, Thr152, Asp171, and Gln194; that span reads GT. Lys195 carries the N6-(pyridoxal phosphate)lysine modification. Pyridoxal 5'-phosphate is bound at residue 235-236; that stretch reads NT.

The protein belongs to the class-V pyridoxal-phosphate-dependent aminotransferase family. SerC subfamily. As to quaternary structure, homodimer. It depends on pyridoxal 5'-phosphate as a cofactor.

It localises to the cytoplasm. It catalyses the reaction O-phospho-L-serine + 2-oxoglutarate = 3-phosphooxypyruvate + L-glutamate. It carries out the reaction 4-(phosphooxy)-L-threonine + 2-oxoglutarate = (R)-3-hydroxy-2-oxo-4-phosphooxybutanoate + L-glutamate. Its pathway is amino-acid biosynthesis; L-serine biosynthesis; L-serine from 3-phospho-D-glycerate: step 2/3. In terms of biological role, catalyzes the reversible conversion of 3-phosphohydroxypyruvate to phosphoserine and of 3-hydroxy-2-oxo-4-phosphonooxybutanoate to phosphohydroxythreonine. The chain is Phosphoserine aminotransferase from Limosilactobacillus fermentum (strain NBRC 3956 / LMG 18251) (Lactobacillus fermentum).